A 240-amino-acid polypeptide reads, in one-letter code: Uridylate kinase (240 aa).

13–16 serves as a coordination point for ATP; it reads KASG. Residues 21–26 are involved in allosteric activation by GTP; that stretch reads GSQGFG. G55 lines the UMP pocket. ATP contacts are provided by G56 and R60. UMP contacts are provided by residues D75 and 136–143; that span reads TGNPFFTT. Residues T163, Q164, Y169, and D172 each contribute to the ATP site.

The protein belongs to the UMP kinase family. In terms of assembly, homohexamer.

The protein resides in the cytoplasm. The catalysed reaction is UMP + ATP = UDP + ADP. Its pathway is pyrimidine metabolism; CTP biosynthesis via de novo pathway; UDP from UMP (UMPK route): step 1/1. Its activity is regulated as follows. Allosterically activated by GTP. Inhibited by UTP. Its function is as follows. Catalyzes the reversible phosphorylation of UMP to UDP. The polypeptide is Uridylate kinase (Sinorhizobium medicae (strain WSM419) (Ensifer medicae)).